Here is an 80-residue protein sequence, read N- to C-terminus: MTLEEKIIEIIVDQLEVTAEECVPEASFINDLGADSLDLAELLLEMEDTFDVEISTEDLKKIRKIQDVIDYLKVRNVTWD.

Residues 1–76 (MTLEEKIIEI…DVIDYLKVRN (76 aa)) form the Carrier domain. Ser-36 is subject to O-(pantetheine 4'-phosphoryl)serine.

Belongs to the acyl carrier protein (ACP) family. 4'-phosphopantetheine is transferred from CoA to a specific serine of apo-ACP by AcpS. This modification is essential for activity because fatty acids are bound in thioester linkage to the sulfhydryl of the prosthetic group.

It localises to the cytoplasm. It participates in lipid metabolism; fatty acid biosynthesis. Functionally, carrier of the growing fatty acid chain in fatty acid biosynthesis. The chain is Acyl carrier protein from Syntrophus aciditrophicus (strain SB).